Consider the following 82-residue polypeptide: ATP synthase subunit c (82 aa).

2 helical membrane passes run 6-26 and 57-77; these read AAASVIAAALAVGLAAIGPGI and LAFMESLTIYGLLVSIVLLFA.

Belongs to the ATPase C chain family. F-type ATPases have 2 components, F(1) - the catalytic core - and F(0) - the membrane proton channel. F(1) has five subunits: alpha(3), beta(3), gamma(1), delta(1), epsilon(1). F(0) has four main subunits: a(1), b(1), b'(1) and c(10-14). The alpha and beta chains form an alternating ring which encloses part of the gamma chain. F(1) is attached to F(0) by a central stalk formed by the gamma and epsilon chains, while a peripheral stalk is formed by the delta, b and b' chains.

The protein localises to the cell inner membrane. Its function is as follows. F(1)F(0) ATP synthase produces ATP from ADP in the presence of a proton or sodium gradient. F-type ATPases consist of two structural domains, F(1) containing the extramembraneous catalytic core and F(0) containing the membrane proton channel, linked together by a central stalk and a peripheral stalk. During catalysis, ATP synthesis in the catalytic domain of F(1) is coupled via a rotary mechanism of the central stalk subunits to proton translocation. Functionally, key component of the F(0) channel; it plays a direct role in translocation across the membrane. A homomeric c-ring of between 10-14 subunits forms the central stalk rotor element with the F(1) delta and epsilon subunits. The polypeptide is ATP synthase subunit c (Gloeobacter violaceus (strain ATCC 29082 / PCC 7421)).